The following is a 333-amino-acid chain: Holliday junction branch migration complex subunit RuvB (333 aa).

Residues 1-182 (MDERLLSGES…FGVLSRLEYY (182 aa)) are large ATPase domain (RuvB-L). ATP is bound by residues Leu-21, Arg-22, Gly-63, Lys-66, Thr-67, Thr-68, 129–131 (EDF), Arg-172, Tyr-182, and Arg-219. Thr-67 is a binding site for Mg(2+). Positions 183–253 (TVDQLSAIVE…ITQMALELLQ (71 aa)) are small ATPAse domain (RuvB-S). Residues 256 to 333 (KLGLDHIDHK…EHFGMEMPKV (78 aa)) form a head domain (RuvB-H) region. Arg-311 and Arg-316 together coordinate DNA.

It belongs to the RuvB family. In terms of assembly, homohexamer. Forms an RuvA(8)-RuvB(12)-Holliday junction (HJ) complex. HJ DNA is sandwiched between 2 RuvA tetramers; dsDNA enters through RuvA and exits via RuvB. An RuvB hexamer assembles on each DNA strand where it exits the tetramer. Each RuvB hexamer is contacted by two RuvA subunits (via domain III) on 2 adjacent RuvB subunits; this complex drives branch migration. In the full resolvosome a probable DNA-RuvA(4)-RuvB(12)-RuvC(2) complex forms which resolves the HJ.

The protein resides in the cytoplasm. The catalysed reaction is ATP + H2O = ADP + phosphate + H(+). In terms of biological role, the RuvA-RuvB-RuvC complex processes Holliday junction (HJ) DNA during genetic recombination and DNA repair, while the RuvA-RuvB complex plays an important role in the rescue of blocked DNA replication forks via replication fork reversal (RFR). RuvA specifically binds to HJ cruciform DNA, conferring on it an open structure. The RuvB hexamer acts as an ATP-dependent pump, pulling dsDNA into and through the RuvAB complex. RuvB forms 2 homohexamers on either side of HJ DNA bound by 1 or 2 RuvA tetramers; 4 subunits per hexamer contact DNA at a time. Coordinated motions by a converter formed by DNA-disengaged RuvB subunits stimulates ATP hydrolysis and nucleotide exchange. Immobilization of the converter enables RuvB to convert the ATP-contained energy into a lever motion, pulling 2 nucleotides of DNA out of the RuvA tetramer per ATP hydrolyzed, thus driving DNA branch migration. The RuvB motors rotate together with the DNA substrate, which together with the progressing nucleotide cycle form the mechanistic basis for DNA recombination by continuous HJ branch migration. Branch migration allows RuvC to scan DNA until it finds its consensus sequence, where it cleaves and resolves cruciform DNA. This chain is Holliday junction branch migration complex subunit RuvB, found in Bacillus mycoides (strain KBAB4) (Bacillus weihenstephanensis).